The sequence spans 152 residues: Deoxyuridine 5'-triphosphate nucleotidohydrolase (152 aa).

Residues 71–73, Asn-84, 88–90, and Met-98 contribute to the substrate site; these read RSG and LID.

Belongs to the dUTPase family. Requires Mg(2+) as cofactor.

It catalyses the reaction dUTP + H2O = dUMP + diphosphate + H(+). It participates in pyrimidine metabolism; dUMP biosynthesis; dUMP from dCTP (dUTP route): step 2/2. Functionally, this enzyme is involved in nucleotide metabolism: it produces dUMP, the immediate precursor of thymidine nucleotides and it decreases the intracellular concentration of dUTP so that uracil cannot be incorporated into DNA. The sequence is that of Deoxyuridine 5'-triphosphate nucleotidohydrolase from Shewanella baltica (strain OS185).